The primary structure comprises 234 residues: Probable transcriptional regulatory protein PFL_3960 (234 aa).

The protein belongs to the TACO1 family.

The protein localises to the cytoplasm. This chain is Probable transcriptional regulatory protein PFL_3960, found in Pseudomonas fluorescens (strain ATCC BAA-477 / NRRL B-23932 / Pf-5).